The following is a 62-amino-acid chain: Omega-lycotoxin-Am1e (62 aa).

Positions glutamate 1 to arginine 15 are excised as a propeptide. 4 disulfides stabilise this stretch: cysteine 19–cysteine 34, cysteine 26–cysteine 39, cysteine 33–cysteine 59, and cysteine 41–cysteine 57.

Belongs to the neurotoxin omega-lctx family. In terms of tissue distribution, expressed by the venom gland.

The protein localises to the secreted. Its function is as follows. Modulates Cav2.1/CACNA1A voltage-gated calcium channels (P/Q-type currents) in rat cerebellar Purkinje cells and hippocampal CA1-CA3 neurons. At saturating concentrations (&gt;10 nM) decelerates activation kinetics and slightly increases peak amplitude without affecting deactivation kinetics. In vivo, does not cause death when intravenously injected into mice. In rat models, through its activity on Cav2.1/CACNA1A, has an ameliorative effect on memory defects provoked by hyperstimulation of N-methyl-D-aspartate receptors (NMDARs) in the hippocampus. This chain is Omega-lycotoxin-Am1e, found in Alopecosa marikovskyi (Wolf spider).